Here is a 143-residue protein sequence, read N- to C-terminus: Phospholipase A2 isozymes PA3A/PA3B/PA5 (143 aa).

Ca(2+) is bound by residues Trp10, Gly12, and Gly14. Intrachain disulfides connect Cys11–Cys33, Cys32–Cys72, and Cys39–Cys65. Residue His36 is part of the active site. Asp37 is a binding site for Ca(2+).

This sequence belongs to the phospholipase A2 family. Group III subfamily. It depends on Ca(2+) as a cofactor. In terms of tissue distribution, expressed by the venom gland.

The protein resides in the secreted. The catalysed reaction is a 1,2-diacyl-sn-glycero-3-phosphocholine + H2O = a 1-acyl-sn-glycero-3-phosphocholine + a fatty acid + H(+). Functionally, PLA2 catalyzes the calcium-dependent hydrolysis of the 2-acyl groups in 3-sn-phosphoglycerides. This is Phospholipase A2 isozymes PA3A/PA3B/PA5 from Heloderma suspectum (Gila monster).